A 134-amino-acid chain; its full sequence is Small ribosomal subunit protein uS17c (134 aa).

A chloroplast-targeting transit peptide spans 1 to 37; the sequence is HHFFTGNGIGLNRFSNPISSPQTQTQTRSLPFPAIKA. Residues 106–134 form a disordered region; that stretch reads FLAVPAPSRKSKKAGSSGELGIPLQSQQE.

It belongs to the universal ribosomal protein uS17 family. Part of the 30S ribosomal subunit.

Its subcellular location is the plastid. The protein localises to the chloroplast. One of the primary rRNA binding proteins, it binds specifically to the 5'-end of 16S ribosomal RNA. The sequence is that of Small ribosomal subunit protein uS17c (RPS17) from Pisum sativum (Garden pea).